The sequence spans 466 residues: Transcription factor eupR (466 aa).

A compositionally biased stretch (polar residues) spans 1-18; it reads MFSTEPRSDTAPGSPSCS. Positions 1 to 22 are disordered; the sequence is MFSTEPRSDTAPGSPSCSETKR. The zn(2)-C6 fungal-type DNA-binding region spans 32–62; it reads CWECKRRKVKCSYSNPSDPRCIGCRRRGTKC.

The protein localises to the nucleus. Its function is as follows. Transcription factor; part of the gene cluster that mediates the biosynthesis of eupenifeldin, a bistropolone meroterpenoid that acts as an antitumor agent. This Phoma sp protein is Transcription factor eupR.